The following is a 355-amino-acid chain: Probable aldo-keto reductase 3 (355 aa).

The active-site Proton donor is the Tyr70. His138 serves as a coordination point for substrate. 217-227 (SPLGRGFFSSG) is a binding site for NADP(+).

This sequence belongs to the aldo/keto reductase family.

This Oryza sativa subsp. indica (Rice) protein is Probable aldo-keto reductase 3.